The sequence spans 724 residues: Catalase-peroxidase (724 aa).

A cross-link (tryptophyl-tyrosyl-methioninium (Trp-Tyr) (with M-252)) is located at residues W98–Y226. Catalysis depends on H99, which acts as the Proton acceptor. Positions Y226–M252 form a cross-link, tryptophyl-tyrosyl-methioninium (Tyr-Met) (with W-98). H267 provides a ligand contact to heme b.

This sequence belongs to the peroxidase family. Peroxidase/catalase subfamily. In terms of assembly, homodimer or homotetramer. It depends on heme b as a cofactor. Formation of the three residue Trp-Tyr-Met cross-link is important for the catalase, but not the peroxidase activity of the enzyme.

The catalysed reaction is H2O2 + AH2 = A + 2 H2O. The enzyme catalyses 2 H2O2 = O2 + 2 H2O. In terms of biological role, bifunctional enzyme with both catalase and broad-spectrum peroxidase activity. The chain is Catalase-peroxidase from Cereibacter sphaeroides (strain ATCC 17025 / ATH 2.4.3) (Rhodobacter sphaeroides).